Here is a 345-residue protein sequence, read N- to C-terminus: tRNA N6-adenosine threonylcarbamoyltransferase (345 aa).

Residues H111 and H115 each contribute to the Fe cation site. Substrate-binding positions include 134-138 (LVSGG), D167, G180, and N276. Fe cation is bound at residue D304.

Belongs to the KAE1 / TsaD family. Requires Fe(2+) as cofactor.

The protein localises to the cytoplasm. The enzyme catalyses L-threonylcarbamoyladenylate + adenosine(37) in tRNA = N(6)-L-threonylcarbamoyladenosine(37) in tRNA + AMP + H(+). Required for the formation of a threonylcarbamoyl group on adenosine at position 37 (t(6)A37) in tRNAs that read codons beginning with adenine. Is involved in the transfer of the threonylcarbamoyl moiety of threonylcarbamoyl-AMP (TC-AMP) to the N6 group of A37, together with TsaE and TsaB. TsaD likely plays a direct catalytic role in this reaction. The protein is tRNA N6-adenosine threonylcarbamoyltransferase of Bordetella avium (strain 197N).